A 270-amino-acid chain; its full sequence is Ribosomal RNA small subunit methyltransferase A (270 aa).

The S-adenosyl-L-methionine site is built by Asn18, Leu20, Gly45, Glu66, Asp91, and Asn112.

The protein belongs to the class I-like SAM-binding methyltransferase superfamily. rRNA adenine N(6)-methyltransferase family. RsmA subfamily.

The protein resides in the cytoplasm. The enzyme catalyses adenosine(1518)/adenosine(1519) in 16S rRNA + 4 S-adenosyl-L-methionine = N(6)-dimethyladenosine(1518)/N(6)-dimethyladenosine(1519) in 16S rRNA + 4 S-adenosyl-L-homocysteine + 4 H(+). In terms of biological role, specifically dimethylates two adjacent adenosines (A1518 and A1519) in the loop of a conserved hairpin near the 3'-end of 16S rRNA in the 30S particle. May play a critical role in biogenesis of 30S subunits. This Psychromonas ingrahamii (strain DSM 17664 / CCUG 51855 / 37) protein is Ribosomal RNA small subunit methyltransferase A.